A 295-amino-acid polypeptide reads, in one-letter code: ATP synthase gamma chain (295 aa).

It belongs to the ATPase gamma chain family. As to quaternary structure, F-type ATPases have 2 components, CF(1) - the catalytic core - and CF(0) - the membrane proton channel. CF(1) has five subunits: alpha(3), beta(3), gamma(1), delta(1), epsilon(1). CF(0) has three main subunits: a, b and c.

The protein localises to the cell inner membrane. Functionally, produces ATP from ADP in the presence of a proton gradient across the membrane. The gamma chain is believed to be important in regulating ATPase activity and the flow of protons through the CF(0) complex. This Aliarcobacter butzleri (strain RM4018) (Arcobacter butzleri) protein is ATP synthase gamma chain.